The following is a 291-amino-acid chain: Meteorin (291 aa).

The first 21 residues, 1-21, serve as a signal peptide directing secretion; sequence MLVATLLCALCCGLLAASAHA. Cystine bridges form between Cys-28/Cys-49, Cys-80/Cys-116, Cys-169/Cys-240, Cys-172/Cys-264, and Cys-182/Cys-286.

The protein belongs to the meteorin family. Monomer. As to expression, highly expressed in brain. Expressed in undifferentiated neural progenitors and in astrocyte lineage, particularly in Bergmann glia, a subtype of radial glia, and a few discrete neuronal populations residing in the superior colliculus, the ocular motor nucleus, the raphe and pontine nuclei, and in various thalamic nuclei. Weakly expressed in heart, kidney, skeletal muscle, spleen, testis, gut and lung.

The protein localises to the secreted. Functionally, involved in both glial cell differentiation and axonal network formation during neurogenesis. Promotes astrocyte differentiation and transforms cerebellar astrocytes into radial glia. Also induces axonal extension in small and intermediate neurons of sensory ganglia by activating nearby satellite glia. This is Meteorin (Metrn) from Mus musculus (Mouse).